Here is a 208-residue protein sequence, read N- to C-terminus: MTKGILGKKVGMTQIFTESGEFIPVTVIEATPNVVLQVKTVETDGYEAVQVGFDDKREVLSNKPAKGHVAKADTAPKRFIREFKNIEGLEVGQEITVEQFEAGDVVDVTGTTKGKGFQGAIKRHGQSRGPMAHGSRYHRRPGSMGPVAPNRVFKGKNLAGRMGGNRVTVQNLEVVQVVPEKNVILIKGNVPGAKKSLIIIKSAVKAAK.

Residues 116–146 (GFQGAIKRHGQSRGPMAHGSRYHRRPGSMGP) form a disordered region.

It belongs to the universal ribosomal protein uL3 family. In terms of assembly, part of the 50S ribosomal subunit. Forms a cluster with proteins L14 and L19.

One of the primary rRNA binding proteins, it binds directly near the 3'-end of the 23S rRNA, where it nucleates assembly of the 50S subunit. The chain is Large ribosomal subunit protein uL3 from Streptococcus mutans serotype c (strain ATCC 700610 / UA159).